The following is a 517-amino-acid chain: U3 small nucleolar RNA-associated protein 15 homolog (517 aa).

WD repeat units lie at residues 36-75, 78-117, 120-159, 162-202, 204-242, 246-285, and 287-324; these read KEFG…PIRN, RFHD…SLRQ, GHSK…ELSS, EHTD…SVMT, QHGQ…QQLV, NHHK…HNFD, and ASSI…EKEA.

Part of the small subunit (SSU) processome, composed of more than 70 proteins and the RNA chaperone small nucleolar RNA (snoRNA) U3. May be a component of the proposed t-UTP subcomplex of the ribosomal small subunit (SSU) processome.

The protein resides in the nucleus. It localises to the nucleolus. Its function is as follows. Ribosome biogenesis factor. Involved in nucleolar processing of pre-18S ribosomal RNA. Required for optimal pre-ribosomal RNA transcription by RNA polymerase I. Part of the small subunit (SSU) processome, first precursor of the small eukaryotic ribosomal subunit. During the assembly of the SSU processome in the nucleolus, many ribosome biogenesis factors, an RNA chaperone and ribosomal proteins associate with the nascent pre-rRNA and work in concert to generate RNA folding, modifications, rearrangements and cleavage as well as targeted degradation of pre-ribosomal RNA by the RNA exosome. In Danio rerio (Zebrafish), this protein is U3 small nucleolar RNA-associated protein 15 homolog (utp15).